A 296-amino-acid chain; its full sequence is Deleted in azoospermia-like (296 aa).

Polar residues predominate over residues 1–18 (MSAANPETPNSTISREAN). Residues 1 to 25 (MSAANPETPNSTISREANTQSSSAA) are disordered. The RRM domain occupies 40–115 (NTVFVGGIDV…KKLKLGPAIR (76 aa)). Residues 80–132 (KGYGFVSFFNDVDVQKIVESQINFHGKKLKLGPAIRKQNLCAYHVQPRPLVFN) are homodimerization. The DAZ domain maps to 167–190 (AYPPYPNSPVQVITGYQLPVYNYQ). Tyr-277 is subject to Phosphotyrosine.

It belongs to the RRM DAZ family. Homodimer and heterodimer. Forms a heterodimer with DAZ. Interacts with BOLL, DAZAP1 and DAZAP2. Interacts with PUM2 Multiple DAZL RRMs can bind to a single RNA containing multiple GUU triplets. In terms of tissue distribution, testis specific.

It is found in the cytoplasm. Its subcellular location is the nucleus. Functionally, RNA-binding protein, which is essential for gametogenesis in both males and females. Plays a central role during spermatogenesis. Acts by binding to the 3'-UTR of mRNA, specifically recognizing GUU triplets, and thereby regulating the translation of key transcripts. The protein is Deleted in azoospermia-like (DAZL) of Callithrix jacchus (White-tufted-ear marmoset).